We begin with the raw amino-acid sequence, 341 residues long: Ribosomal RNA small subunit methyltransferase H (341 aa).

S-adenosyl-L-methionine-binding positions include 47–49 (GGY), aspartate 64, phenylalanine 97, aspartate 109, and glutamine 116.

It belongs to the methyltransferase superfamily. RsmH family.

It localises to the cytoplasm. It carries out the reaction cytidine(1402) in 16S rRNA + S-adenosyl-L-methionine = N(4)-methylcytidine(1402) in 16S rRNA + S-adenosyl-L-homocysteine + H(+). In terms of biological role, specifically methylates the N4 position of cytidine in position 1402 (C1402) of 16S rRNA. The chain is Ribosomal RNA small subunit methyltransferase H from Allorhizobium ampelinum (strain ATCC BAA-846 / DSM 112012 / S4) (Agrobacterium vitis (strain S4)).